The chain runs to 342 residues: Voltage-gated hydrogen channel 1 (342 aa).

2 disordered regions span residues 1 to 20 (MEGD…INPN) and 74 to 102 (FNDN…SEQK). Topologically, residues 1–148 (MEGDNCNKSR…KLRHILHSKP (148 aa)) are cytoplasmic. Residues 86–102 (QEQSTQNTMISMQSEQK) are compositionally biased toward polar residues. Residues 149-169 (IHVAIIVLVVLDSFLVVGELL) form a helical membrane-spanning segment. The Extracellular segment spans residues 170–185 (IDLKVIIVPHGNPAPE). The helical transmembrane segment at 186-208 (ILHGFSLSILSIFMVEIALKIIA) threads the bilayer. Residues 209 to 217 (DHRHFIHHK) lie on the Cytoplasmic side of the membrane. A helical transmembrane segment spans residues 218–238 (VEVLDAVVVVISFGVDIALIF). Residues 239–247 (VGESEALAA) lie on the Extracellular side of the membrane. Residues 248-268 (IGLLVILRLWRVFRIINGIIV) form a helical membrane-spanning segment. At 269–342 (TVKTKADDRV…HSTTTASADV (74 aa)) the chain is on the cytoplasmic side. Positions 271 to 315 (KTKADDRVHEIKKKNSELELQIHNLEEKLSQKEQDMSRLHEILRC) form a coiled coil.

It belongs to the hydrogen channel family. As to quaternary structure, homodimer.

The protein resides in the membrane. Its subcellular location is the cell membrane. With respect to regulation, less sensitive to zinc ions as compared to the mammalian homologs. Functionally, mediates the voltage-dependent proton permeability of excitable membranes. Forms a proton-selective channel through which protons may pass in accordance with their electrochemical gradient. In Ciona intestinalis (Transparent sea squirt), this protein is Voltage-gated hydrogen channel 1 (HVCN1).